The chain runs to 180 residues: UPF0227 protein Shew_1627 (180 aa).

It belongs to the UPF0227 family.

The protein is UPF0227 protein Shew_1627 of Shewanella loihica (strain ATCC BAA-1088 / PV-4).